We begin with the raw amino-acid sequence, 452 residues long: 51.5 kDa protein (452 aa).

Positions 1–126 (MIQSPPGSGK…KDTYDYMIEG (126 aa)) constitute a Helicase ATP-binding domain. Positions 177–333 (DVVQEYVKHA…NIVQAKQCPD (157 aa)) constitute a Helicase C-terminal domain. A zinc finger spans residues 331–348 (CPDCSAMWPLSQKMCNLC).

Its function is as follows. May play a role in either regulating bacteriophages replication or specifying expression of its own genes. The polypeptide is 51.5 kDa protein (Lactococcus (lactic streptococci)).